The chain runs to 427 residues: Trigger factor (427 aa).

Positions 163–248 constitute a PPIase FKBP-type domain; that stretch reads GDTVILDFEG…LHEIKTKEVP (86 aa).

It belongs to the FKBP-type PPIase family. Tig subfamily.

It is found in the cytoplasm. The enzyme catalyses [protein]-peptidylproline (omega=180) = [protein]-peptidylproline (omega=0). Functionally, involved in protein export. Acts as a chaperone by maintaining the newly synthesized protein in an open conformation. Functions as a peptidyl-prolyl cis-trans isomerase. The protein is Trigger factor of Listeria monocytogenes serotype 4b (strain CLIP80459).